A 128-amino-acid chain; its full sequence is MIFKFFEAIGKRKCSIAKISLFSTVKYNCGVININGKHAYEYLQKNCNPFDFLKIKNYNVCIYVKGGGLIGQAEAIKLAISRALKSFLRKKKIKKLKDFGFLTRNSSCKERRKYGLKKARKAPQYSKR.

The protein belongs to the universal ribosomal protein uS9 family.

The protein resides in the plastid. This chain is Small ribosomal subunit protein uS9c (rps9), found in Euglena longa (Euglenophycean alga).